The following is a 1090-amino-acid chain: Leucine-rich repeat receptor-like serine/threonine-protein kinase RGI4 (1090 aa).

The N-terminal stretch at 1–20 (MPRNPRFCFFLFLLFHSSLF) is a signal peptide. The Extracellular portion of the chain corresponds to 21–702 (FSIPCFSIDE…IQTRHRSAVK (682 aa)). The LRR 1 repeat unit spans residues 36 to 59 (LSWKSQLNISGDALSSWKASESNP). N-linked (GlcNAc...) asparagine glycosylation is present at N43. C60 and C67 are oxidised to a cystine. 4 LRR repeats span residues 95–119 (IKSLTLLSLTSVNLTGSIPKELGDL), 120–143 (SELEVLDLADNSLSGEIPVDIFKL), 145–166 (KLKILSLNTNNLEGVIPSELGN), and 168–191 (VNLIELTLFDNKLAGEIPRTIGEL). A glycan (N-linked (GlcNAc...) asparagine) is linked at N107. 4 short sequence motifs (small peptide recognition) span residues 176-177 (FD), 198-201 (RAGG), 221-226 (TLGLAE), and Y249. LRR repeat units follow at residues 216 to 240 (CESLVTLGLAETSLSGRLPASIGNL), 242 to 264 (KVQTIALYTSLLSGPIPDEIGNC), 265 to 288 (TELQNLYLYQNSISGSIPVSMGRL), 289 to 312 (KKLQSLLLWQNNLVGKIPTELGTC), 314 to 335 (ELFLVDLSENLLTGNIPRSFGN), 336 to 360 (LPNLQELQLSVNQLSGTIPEELANC), and 362 to 386 (KLTHLEIDNNQISGEIPPLIGKLTS). N-linked (GlcNAc...) asparagine glycosylation is present at N263. The CLE45 peptide binding signature appears at 269-273 (NLYLY). The short motif at 271 to 273 (YLY) is the Small peptide recognition element. 2 consecutive short sequence motifs (small peptide recognition) follow at residues 319–322 (DLSE) and 341–343 (ELQ). A glycan (N-linked (GlcNAc...) asparagine) is linked at N359. Short sequence motifs (small peptide recognition) lie at residues 389-393 (MFFAW) and 415-418 (DLSY). LRR repeat units follow at residues 408 to 432 (CQELQAIDLSYNNLSGSIPNGIFEI), 434 to 456 (NLTKLLLLSNYLSGFIPPDIGNC), 457 to 480 (TNLYRLRLNGNRLAGNIPAEIGNL), 481 to 504 (KNLNFIDISENRLIGNIPPEISGC), 506 to 526 (SLEFVDLHSNGLTGGLPGTLP), 527 to 550 (KSLQFIDLSDNSLTGSLPTGIGSL), 551 to 574 (TELTKLNLAKNRFSGEIPREISSC), 576 to 598 (SLQLLNLGDNGFTGEIPNELGRI), 600 to 622 (SLAISLNLSCNHFTGEIPSRFSS), 623 to 646 (LTNLGTLDVSHNKLAGNLNVLADL), and 647 to 670 (QNLVSLNISFNEFSGELPNTLFFR). Residues N420 and N434 are each glycosylated (N-linked (GlcNAc...) asparagine). Residues 437–441 (KLLLL) carry the Small peptide recognition motif. N455 carries an N-linked (GlcNAc...) asparagine glycan. The Small peptide recognition signature appears at 461 to 463 (RLR). N606 carries N-linked (GlcNAc...) asparagine glycosylation. N653 is a glycosylation site (N-linked (GlcNAc...) asparagine). The chain crosses the membrane as a helical span at residues 703 to 723 (VTMSILVAASVVLVLMAVYTL). At 724–1090 (VKAQRITGKQ…CSFAYSDESV (367 aa)) the chain is on the cytoplasmic side. A Protein kinase domain is found at 758 to 1040 (LTSANVIGTG…KDIVAMLKEI (283 aa)). Residues 764–772 (IGTGSSGVV) and K786 each bind ATP. Phosphotyrosine occurs at positions 829 and 869. The Proton acceptor role is filled by D882. Y932 carries the phosphotyrosine modification. An LRR 24 repeat occupies 1037–1060 (LKEIRQFDMDRSESDMIKGGKCEK). The segment at 1054 to 1079 (KGGKCEKWQPQPLPPEKIVSTPRGSS) is disordered.

The protein belongs to the protein kinase superfamily. Ser/Thr protein kinase family. Self-interacts. Interacts with RGF1; this interaction triggers its phosphorylation and ubiquitination and the formation of heterodimers with SERK1. Post-translationally, autophosphorylated. In terms of processing, phosphorylated and ubiquitinated upon interaction with RGF1, thus leading to activation a subsequent degradation. As to expression, expressed in floers, pollen grains and stipules. Present in roots.

It localises to the cell membrane. It carries out the reaction L-seryl-[protein] + ATP = O-phospho-L-seryl-[protein] + ADP + H(+). The catalysed reaction is L-threonyl-[protein] + ATP = O-phospho-L-threonyl-[protein] + ADP + H(+). Receptor with a serine/threonine-protein kinase activity. Together with SKM1, LRR-rich receptor-like kinase (LRR-RLK) required for male fertility by the perception of CLE43 and CLE45 peptides and the transduction of their promoting action in pollen tubes, especially under relatively high temperature (at 30 degrees Celsius), thus conferring tolerance against high temperature probably through the maintenance of mitochondrial activity. Seems to not be involved in the perception of CLE45 peptide in roots. Together with RGI1, RGI2, RGI3, RGI4 and RGI5, acts as receptor of RGF1, a peptide hormone that maintains the postembryonic root stem cell niche by regulating the expression levels and patterns of the transcription factor PLETHORA (PLT). Links RGF1 signal with its downstream components. The protein is Leucine-rich repeat receptor-like serine/threonine-protein kinase RGI4 of Arabidopsis thaliana (Mouse-ear cress).